Reading from the N-terminus, the 466-residue chain is FVGFKAGVKEYKLTYYTPDYETKDTDILAAFRVTPQPGVPPEEAGAAVAAESSTGTWTAVWTDGLTSLDRYKGRCYHIEPVAGEENQYICYVAYPLDLFEEGSVTNMFTSIVGNVFGFKALRALRLEDLRIPPAYSKTFQGPPHGIQVERDKLNKYGRPLLGCTIKPKLGLSAKNYGRACYECLRGGLDFTKDDENVNSQPFMRWRDRFLFCAEAIYKAQAETGEIKGHYLNATAGTCEEMMKRAVFARELGVPIVMHDYLTGGFTANTSLAHYCRDNGLLLHIHRAMHAVIDRQKNHGMHFRVLAKALRLSGGDHIHAGTVVGKLEGERDITLGFVDLLRDDFIEKDRSRGIYFTQDWVSLPGVIPVASGGIHVWHMPALTEIFGDDSVLQFGGGTLGHPWGNAPGAVANRVALEACVQARNEGRDLAREGNEIIREASKWSPELAAACEVWKEIKFEFEAMDTL.

Lys5 bears the N6,N6,N6-trimethyllysine mark. Substrate-binding residues include Asn114 and Thr164. Lys166 acts as the Proton acceptor in catalysis. Lys168 contacts substrate. Mg(2+) contacts are provided by Lys192, Asp194, and Glu195. Lys192 is subject to N6-carboxylysine. Residue His285 is the Proton acceptor of the active site. Positions 286, 318, and 370 each coordinate substrate.

It belongs to the RuBisCO large chain family. Type I subfamily. Heterohexadecamer of 8 large chains and 8 small chains; disulfide-linked. The disulfide link is formed within the large subunit homodimers. Requires Mg(2+) as cofactor. In terms of processing, the disulfide bond which can form in the large chain dimeric partners within the hexadecamer appears to be associated with oxidative stress and protein turnover.

The protein resides in the plastid. The protein localises to the chloroplast. The enzyme catalyses 2 (2R)-3-phosphoglycerate + 2 H(+) = D-ribulose 1,5-bisphosphate + CO2 + H2O. It catalyses the reaction D-ribulose 1,5-bisphosphate + O2 = 2-phosphoglycolate + (2R)-3-phosphoglycerate + 2 H(+). Functionally, ruBisCO catalyzes two reactions: the carboxylation of D-ribulose 1,5-bisphosphate, the primary event in carbon dioxide fixation, as well as the oxidative fragmentation of the pentose substrate in the photorespiration process. Both reactions occur simultaneously and in competition at the same active site. The protein is Ribulose bisphosphate carboxylase large chain of Bixa orellana (Lipstick tree).